Reading from the N-terminus, the 464-residue chain is E3 ubiquitin-protein ligase TRAIP (464 aa).

The RING-type; atypical zinc-finger motif lies at 7-50; it reads CTICSDFFDNARDVAAITCGHTFHQECLLQWFHSAPHRTCPQCR. Coiled-coil stretches lie at residues 142–186 and 236–277; these read LDKQ…MIRD and AQKA…LQKT. A disordered region spans residues 439–464; that stretch reads KRKKVSRPTACTSSLANQPRLEDFLK. Positions 456–464 match the PIP-box motif; that stretch reads QPRLEDFLK.

This sequence belongs to the TRAIP family.

It is found in the nucleus. The protein localises to the nucleoplasm. It localises to the nucleolus. The protein resides in the chromosome. Its subcellular location is the cytoplasm. It carries out the reaction S-ubiquitinyl-[E2 ubiquitin-conjugating enzyme]-L-cysteine + [acceptor protein]-L-lysine = [E2 ubiquitin-conjugating enzyme]-L-cysteine + N(6)-ubiquitinyl-[acceptor protein]-L-lysine.. Its pathway is protein modification; protein ubiquitination. Its function is as follows. E3 ubiquitin ligase required to protect genome stability in response to replication stress. Acts as a key regulator of interstrand cross-link repair, which takes place when both strands of duplex DNA are covalently tethered together, thereby blocking replication and transcription. Controls the choice between the two pathways of replication-coupled interstrand-cross-link repair by mediating ubiquitination of mcm7 subunit of the CMG helicase complex. Short ubiquitin chains on mcm7 promote recruitment of DNA glycosylase neil3. If the interstrand cross-link cannot be cleaved by neil3, the ubiquitin chains continue to grow on mcm7, promoting the unloading of the CMG helicase complex by the vcp/p97 ATPase, enabling the Fanconi anemia DNA repair pathway. Only catalyzes ubiquitination of mcm7 when forks converge. Also involved in the repair of covalent DNA-protein cross-links (DPCs) during DNA synthesis: promotes ubiquitination of DPCs, leading to their degradation by the proteasome. Also acts as a negative regulator of innate immune signaling by inhibiting activation of NF-kappa-B mediated by TNF. The chain is E3 ubiquitin-protein ligase TRAIP from Xenopus laevis (African clawed frog).